The following is a 259-amino-acid chain: 3-deoxy-manno-octulosonate cytidylyltransferase (259 aa).

Belongs to the KdsB family.

It is found in the cytoplasm. It catalyses the reaction 3-deoxy-alpha-D-manno-oct-2-ulosonate + CTP = CMP-3-deoxy-beta-D-manno-octulosonate + diphosphate. Its pathway is nucleotide-sugar biosynthesis; CMP-3-deoxy-D-manno-octulosonate biosynthesis; CMP-3-deoxy-D-manno-octulosonate from 3-deoxy-D-manno-octulosonate and CTP: step 1/1. It functions in the pathway bacterial outer membrane biogenesis; lipopolysaccharide biosynthesis. Functionally, activates KDO (a required 8-carbon sugar) for incorporation into bacterial lipopolysaccharide in Gram-negative bacteria. This chain is 3-deoxy-manno-octulosonate cytidylyltransferase, found in Maricaulis maris (strain MCS10) (Caulobacter maris).